Consider the following 314-residue polypeptide: Olfactory receptor 1Q1 (314 aa).

Topologically, residues 1–25 are extracellular; the sequence is MDNSNWTSVSHFVLLGISTHPEEQI. Residue asparagine 5 is glycosylated (N-linked (GlcNAc...) asparagine). Residues 26–49 form a helical membrane-spanning segment; that stretch reads PLFLVFSLMYAINISGNLAIITLI. Residues 50 to 57 lie on the Cytoplasmic side of the membrane; sequence LSAPRLHI. The helical transmembrane segment at 58-79 threads the bilayer; the sequence is PMYIFLSNLALTDICFTSTTVP. Over 80-100 the chain is Extracellular; the sequence is KMLQIIFSPTKVISYTGCLAQ. Cysteine 97 and cysteine 189 are oxidised to a cystine. A helical transmembrane segment spans residues 101–120; that stretch reads TYFFICFAVMENFILAVMAY. The Cytoplasmic portion of the chain corresponds to 121–139; it reads DRYIAICHPFHYTMILTRM. Residues 140–158 traverse the membrane as a helical segment; that stretch reads LCVKMVVMCHALSHLHAML. The Extracellular portion of the chain corresponds to 159–195; sequence HTFLIGQLIFCADNRIPHFFCDLYALMKISCTSTYLN. Residues 196–219 form a helical membrane-spanning segment; it reads TLMIHTEGAVVISGALAFITASYA. Over 220 to 236 the chain is Cytoplasmic; it reads CIILVVLRIPSAKGRWK. The helical transmembrane segment at 237–259 threads the bilayer; the sequence is TFSTCGSHLTVVAIFYGTLSWVY. Residues 260-272 are Extracellular-facing; sequence FRPLSSYSVTKGR. The chain crosses the membrane as a helical span at residues 273–292; that stretch reads IITVVYTVVTPMLNPFIYSL. At 293–314 the chain is on the cytoplasmic side; the sequence is RNGDVKGGFMKWMSRMQTFFFR.

It belongs to the G-protein coupled receptor 1 family.

The protein localises to the cell membrane. In terms of biological role, odorant receptor. This is Olfactory receptor 1Q1 (OR1Q1) from Homo sapiens (Human).